The chain runs to 1030 residues: Subtilin biosynthesis protein SpaB (1030 aa).

This sequence to S.epidermidis EpiB and L.lactis NisB.

It is found in the cell membrane. Involved in the post-translational modification of the lantibiotic subtilin. In Bacillus subtilis, this protein is Subtilin biosynthesis protein SpaB (spaB).